The primary structure comprises 808 residues: Probable inorganic carbon transporter subunit DabA (808 aa).

C335, D337, H497, and C512 together coordinate Zn(2+).

This sequence belongs to the inorganic carbon transporter (TC 9.A.2) DabA family. As to quaternary structure, forms a complex with DabB. The cofactor is Zn(2+).

Its subcellular location is the cell inner membrane. In terms of biological role, part of an energy-coupled inorganic carbon pump. This Rhodopseudomonas palustris (strain ATCC BAA-98 / CGA009) protein is Probable inorganic carbon transporter subunit DabA.